The sequence spans 174 residues: Adenine phosphoribosyltransferase (174 aa).

This sequence belongs to the purine/pyrimidine phosphoribosyltransferase family. Homodimer.

It is found in the cytoplasm. The enzyme catalyses AMP + diphosphate = 5-phospho-alpha-D-ribose 1-diphosphate + adenine. The protein operates within purine metabolism; AMP biosynthesis via salvage pathway; AMP from adenine: step 1/1. Catalyzes a salvage reaction resulting in the formation of AMP, that is energically less costly than de novo synthesis. The polypeptide is Adenine phosphoribosyltransferase (Mycobacterium sp. (strain JLS)).